The primary structure comprises 408 residues: Imidazolonepropionase (408 aa).

Fe(3+) is bound by residues H74 and H76. Residues H74 and H76 each coordinate Zn(2+). Residues R83, Y146, and H179 each coordinate 4-imidazolone-5-propanoate. Position 146 (Y146) interacts with N-formimidoyl-L-glutamate. H244 lines the Fe(3+) pocket. Residue H244 participates in Zn(2+) binding. Q247 is a binding site for 4-imidazolone-5-propanoate. D319 is a Fe(3+) binding site. Residue D319 coordinates Zn(2+). N321 and G323 together coordinate N-formimidoyl-L-glutamate. Residue T324 coordinates 4-imidazolone-5-propanoate.

It belongs to the metallo-dependent hydrolases superfamily. HutI family. Requires Zn(2+) as cofactor. It depends on Fe(3+) as a cofactor.

Its subcellular location is the cytoplasm. It catalyses the reaction 4-imidazolone-5-propanoate + H2O = N-formimidoyl-L-glutamate. Its pathway is amino-acid degradation; L-histidine degradation into L-glutamate; N-formimidoyl-L-glutamate from L-histidine: step 3/3. Functionally, catalyzes the hydrolytic cleavage of the carbon-nitrogen bond in imidazolone-5-propanoate to yield N-formimidoyl-L-glutamate. It is the third step in the universal histidine degradation pathway. The polypeptide is Imidazolonepropionase (Ralstonia nicotianae (strain ATCC BAA-1114 / GMI1000) (Ralstonia solanacearum)).